A 209-amino-acid polypeptide reads, in one-letter code: Ribosomal RNA large subunit methyltransferase E (209 aa).

Residues Gly-63, Trp-65, Asp-83, Asp-99, and Asp-124 each coordinate S-adenosyl-L-methionine. The active-site Proton acceptor is the Lys-164.

The protein belongs to the class I-like SAM-binding methyltransferase superfamily. RNA methyltransferase RlmE family.

It is found in the cytoplasm. It carries out the reaction uridine(2552) in 23S rRNA + S-adenosyl-L-methionine = 2'-O-methyluridine(2552) in 23S rRNA + S-adenosyl-L-homocysteine + H(+). Its function is as follows. Specifically methylates the uridine in position 2552 of 23S rRNA at the 2'-O position of the ribose in the fully assembled 50S ribosomal subunit. The sequence is that of Ribosomal RNA large subunit methyltransferase E from Baumannia cicadellinicola subsp. Homalodisca coagulata.